The following is a 229-amino-acid chain: Chromophore lyase CpcT/CpeT 1 (229 aa).

This sequence belongs to the CpcT/CpeT biliprotein lyase family.

In terms of biological role, covalently attaches a chromophore to Cys residue(s) of phycobiliproteins. The sequence is that of Chromophore lyase CpcT/CpeT 1 from Gloeobacter violaceus (strain ATCC 29082 / PCC 7421).